Here is a 132-residue protein sequence, read N- to C-terminus: Ribosome-binding factor A (132 aa).

It belongs to the RbfA family. In terms of assembly, monomer. Binds 30S ribosomal subunits, but not 50S ribosomal subunits or 70S ribosomes.

The protein resides in the cytoplasm. Its function is as follows. One of several proteins that assist in the late maturation steps of the functional core of the 30S ribosomal subunit. Associates with free 30S ribosomal subunits (but not with 30S subunits that are part of 70S ribosomes or polysomes). Required for efficient processing of 16S rRNA. May interact with the 5'-terminal helix region of 16S rRNA. In Pectobacterium carotovorum subsp. carotovorum (strain PC1), this protein is Ribosome-binding factor A.